The primary structure comprises 252 residues: MAKNAMLCLLILRVVLALAFATNKKGDEEPENHSTGIFGKVGRVVTVALAMSSRLGGADATRGGGAVYGRDLKSNQLPNNNWMAPPPPMAIRSAKVYDSKHSPAEYLKKFAQDFRRKTGMHSQRHHEETTLEQEKRVAGAGPDPIHHQDTTLEQEKRAVPAGPDPKHHEETTLEQEKRAVPAGPDPKHHEETTLEQEKRAVPAGPDPKHHEETTLEQEKRAVPAGPDPKHHEETTFEQEKRGAPAGPDPIHH.

Positions 1–21 (MAKNAMLCLLILRVVLALAFA) are cleaved as a signal peptide. The tract at residues 21–83 (ATNKKGDEEP…SNQLPNNNWM (63 aa)) is required for secretion from the host cytoplasm to the host apoplasm. Residue N32 is glycosylated (N-linked (GlcNAc...) asparagine). Positions 116–252 (RKTGMHSQRH…APAGPDPIHH (137 aa)) are disordered. 2 stretches are compositionally biased toward basic and acidic residues: residues 125-137 (HHEETTLEQEKRV) and 144-242 (PIHH…EKRG). One copy of the A-1 repeat lies at 127–135 (EETTLEQEK). Positions 127–219 (EETTLEQEKR…HEETTLEQEK (93 aa)) are 6 X approximate repeat A. The stretch at 136-147 (RVAGAGPDPIHH) is one CLE-1 repeat. Residues 136–252 (RVAGAGPDPI…APAGPDPIHH (117 aa)) are 6 X approximate repeat CLE. The A-2 repeat unit spans residues 148–156 (QDTTLEQEK). The CLE-2 repeat unit spans residues 157 to 168 (RAVPAGPDPKHH). The A-3 repeat unit spans residues 169–177 (EETTLEQEK). A CLE-3 repeat occupies 178-189 (RAVPAGPDPKHH). The A-4 repeat unit spans residues 190-198 (EETTLEQEK). One copy of the CLE-4 repeat lies at 199–210 (RAVPAGPDPKHH). An A-5 repeat occupies 211–219 (EETTLEQEK). The CLE-5 repeat unit spans residues 220 to 231 (RAVPAGPDPKHH). Residues 232–240 (EETTFEQEK) form an A-6 repeat. Residues 241–252 (RGAPAGPDPIHH) form a CLE-6 repeat.

It belongs to the CLV3/ESR signal peptide family. As to expression, highly expressed exclusively within the dorsal esophageal gland cell during syncytium formation in host plants.

The protein resides in the secreted. Its subcellular location is the host cytoplasm. It localises to the host extracellular space. It is found in the extracellular space. The protein localises to the apoplast. Its function is as follows. Mimics host plant CLE extracellular signal peptides that regulate cell fate. May play a role in the differentiation or division of feeding cells (syncytia) induced in plant roots during infection. In Globodera rostochiensis (Golden nematode worm), this protein is CLAVATA3/ESR (CLE)-related protein 4A-1 (CLE-4A-1).